An 882-amino-acid polypeptide reads, in one-letter code: Alanine--tRNA ligase (882 aa).

Zn(2+) is bound by residues His-568, His-572, Cys-670, and His-674.

The protein belongs to the class-II aminoacyl-tRNA synthetase family. Zn(2+) is required as a cofactor.

It is found in the cytoplasm. The catalysed reaction is tRNA(Ala) + L-alanine + ATP = L-alanyl-tRNA(Ala) + AMP + diphosphate. In terms of biological role, catalyzes the attachment of alanine to tRNA(Ala) in a two-step reaction: alanine is first activated by ATP to form Ala-AMP and then transferred to the acceptor end of tRNA(Ala). Also edits incorrectly charged Ser-tRNA(Ala) and Gly-tRNA(Ala) via its editing domain. The polypeptide is Alanine--tRNA ligase (Lactobacillus johnsonii (strain CNCM I-12250 / La1 / NCC 533)).